The sequence spans 702 residues: Ribosomal RNA large subunit methyltransferase K/L (702 aa).

The THUMP domain occupies 43–154 (LVYQSLMWSR…KETASIALDL (112 aa)).

Belongs to the methyltransferase superfamily. RlmKL family.

It localises to the cytoplasm. It carries out the reaction guanosine(2445) in 23S rRNA + S-adenosyl-L-methionine = N(2)-methylguanosine(2445) in 23S rRNA + S-adenosyl-L-homocysteine + H(+). The enzyme catalyses guanosine(2069) in 23S rRNA + S-adenosyl-L-methionine = N(2)-methylguanosine(2069) in 23S rRNA + S-adenosyl-L-homocysteine + H(+). Functionally, specifically methylates the guanine in position 2445 (m2G2445) and the guanine in position 2069 (m7G2069) of 23S rRNA. This chain is Ribosomal RNA large subunit methyltransferase K/L, found in Escherichia coli O6:H1 (strain CFT073 / ATCC 700928 / UPEC).